The sequence spans 365 residues: Caffeic acid 3-O-methyltransferase 1 (365 aa).

Met130–Leu136 contacts substrate. The interval Ala162–Met180 is substrate binding. Positions 208, 231, 251, 252, and 265 each coordinate S-adenosyl-L-methionine. His269 serves as the catalytic Proton acceptor.

Belongs to the class I-like SAM-binding methyltransferase superfamily. Cation-independent O-methyltransferase family. COMT subfamily. As to quaternary structure, homodimer.

It catalyses the reaction (E)-caffeate + S-adenosyl-L-methionine = (E)-ferulate + S-adenosyl-L-homocysteine + H(+). Its pathway is aromatic compound metabolism; phenylpropanoid biosynthesis. Functionally, catalyzes the conversion of caffeic acid to ferulic acid and of 5-hydroxyferulic acid to sinapic acid. The resulting products may subsequently be converted to the corresponding alcohols that are incorporated into lignins. In Populus kitakamiensis (Aspen), this protein is Caffeic acid 3-O-methyltransferase 1 (HOMT1).